Reading from the N-terminus, the 506-residue chain is MIKIQPEEISSVIRKQIEQYNQEVKVVNIGTVLQVGDGIARIYGLAKVMAGELLEFEDGTIGIALNLESNNVGAVMMGEGLTIQEGSSVKATGKIAQIPVGEAYVGRVVNALARPIDGKGEIPTSEYRLLESPAPGIISRRSVYEPLQTGLVAIDAMIPIGRGQRELIIGDRQTGKTAVATDTILNQKGQNVICVYVAIGQKASSVAQVVNTLEERGAMEYTIVVAENANAPATLQYLAPYTGATLAEYFMYKGRHTLVIYDDLSKQAQAYREMSLLLRRPPGREAYPGDVFYLHSRLLERAAKLSTALGEGSMTALPVVETQAGDVSAYIPTNVISITDGQIFLSADLFNAGLRPAINVGISVSRVGSAAQVKAMKQVAGKLKLELAQFAELEAFSQFASDLDKATQNQLARGRRLRELLKQAQAAPLSVEEQVSTIYTGINGYLDSIEVEDVRKFLAGLRGFIAKSYPKVYEIVRTTKTFTTEAEDLLKEAINEYKKNFSATAA.

170–177 (GDRQTGKT) serves as a coordination point for ATP.

Belongs to the ATPase alpha/beta chains family. In terms of assembly, F-type ATPases have 2 components, CF(1) - the catalytic core - and CF(0) - the membrane proton channel. CF(1) has five subunits: alpha(3), beta(3), gamma(1), delta(1), epsilon(1). CF(0) has four main subunits: a, b, b' and c.

It is found in the plastid. The protein resides in the chloroplast thylakoid membrane. It catalyses the reaction ATP + H2O + 4 H(+)(in) = ADP + phosphate + 5 H(+)(out). Produces ATP from ADP in the presence of a proton gradient across the membrane. The alpha chain is a regulatory subunit. The sequence is that of ATP synthase subunit alpha, chloroplastic from Chlorokybus atmophyticus (Soil alga).